Here is a 474-residue protein sequence, read N- to C-terminus: Putative response regulator NtrX-like (474 aa).

The region spanning 5–121 (DVLIVDDEES…KLVILLTRAC (117 aa)) is the Response regulatory domain. At Asp-54 the chain carries 4-aspartylphosphate. A Sigma-54 factor interaction domain is found at 143–368 (LVGECSVTLK…LRNVVEWTLI (226 aa)). Residues 171–178 (GKVGSGKE) and 231–240 (ANNGTLYIDE) each bind ATP.

Member of the two-component regulatory system RC0849/RC0948. In Rickettsia conorii (strain ATCC VR-613 / Malish 7), this protein is Putative response regulator NtrX-like.